We begin with the raw amino-acid sequence, 338 residues long: Phenylalanine--tRNA ligase alpha subunit (338 aa).

Glu252 provides a ligand contact to Mg(2+).

Belongs to the class-II aminoacyl-tRNA synthetase family. Phe-tRNA synthetase alpha subunit type 1 subfamily. As to quaternary structure, tetramer of two alpha and two beta subunits. The cofactor is Mg(2+).

It is found in the cytoplasm. The catalysed reaction is tRNA(Phe) + L-phenylalanine + ATP = L-phenylalanyl-tRNA(Phe) + AMP + diphosphate + H(+). This is Phenylalanine--tRNA ligase alpha subunit from Ectopseudomonas mendocina (strain ymp) (Pseudomonas mendocina).